The chain runs to 86 residues: CLAVATA3/ESR (CLE)-related protein 7 (86 aa).

Positions 1–22 (MASKALLLFVMLTFLLVIEMEG) are cleaved as a signal peptide. N-linked (GlcNAc...) asparagine glycosylation is present at Asn-46. A disordered region spans residues 63–86 (VDRFSPGGPDPQHHSYPLSSKPRI). Hydroxyproline is present on residues Pro-68 and Pro-71. An O-linked (Ara...) hydroxyproline glycan is attached at Pro-71.

This sequence belongs to the CLV3/ESR signal peptide family. Post-translationally, the O-glycosylation (arabinosylation) of the hydroxyproline Pro-71 enhances binding affinity of the CLE7p peptide for its receptor. As to expression, expressed in roots and seedlings.

It localises to the secreted. The protein resides in the extracellular space. Functionally, extracellular signal peptide that regulates cell fate. The sequence is that of CLAVATA3/ESR (CLE)-related protein 7 from Arabidopsis thaliana (Mouse-ear cress).